A 452-amino-acid chain; its full sequence is Chromosomal replication initiator protein DnaA (452 aa).

The interval 1 to 73 (MSPNSTLWQT…NELATKYSST (73 aa)) is domain I, interacts with DnaA modulators. Residues 73-102 (TPVRLKFVSQEEVIEEPVADRKLTIDYRQG) form a domain II region. Residues 103–323 (NLNSTYTFDS…GALIRLISYA (221 aa)) are domain III, AAA+ region. Residues G147, G149, K150, and T151 each coordinate ATP. Residues 324-452 (QTFNLEITMN…VKKIDSPLLK (129 aa)) form a domain IV, binds dsDNA region.

It belongs to the DnaA family. Oligomerizes as a right-handed, spiral filament on DNA at oriC.

The protein localises to the cytoplasm. In terms of biological role, plays an essential role in the initiation and regulation of chromosomal replication. ATP-DnaA binds to the origin of replication (oriC) to initiate formation of the DNA replication initiation complex once per cell cycle. Binds the DnaA box (a 9 base pair repeat at the origin) and separates the double-stranded (ds)DNA. Forms a right-handed helical filament on oriC DNA; dsDNA binds to the exterior of the filament while single-stranded (ss)DNA is stabiized in the filament's interior. The ATP-DnaA-oriC complex binds and stabilizes one strand of the AT-rich DNA unwinding element (DUE), permitting loading of DNA polymerase. After initiation quickly degrades to an ADP-DnaA complex that is not apt for DNA replication. Binds acidic phospholipids. In Acholeplasma laidlawii (strain PG-8A), this protein is Chromosomal replication initiator protein DnaA.